Reading from the N-terminus, the 308-residue chain is Putative proline iminopeptidase (308 aa).

Positions 30-290 (KPVLYIHGGP…LYVTNNAGHS (261 aa)) constitute an AB hydrolase-1 domain. Ser105 acts as the Nucleophile in catalysis. Asp261 is an active-site residue. Residue His289 is the Proton donor of the active site.

It belongs to the peptidase S33 family.

It localises to the cytoplasm. It carries out the reaction Release of N-terminal proline from a peptide.. Functionally, specifically catalyzes the removal of N-terminal proline residues from peptides. This chain is Putative proline iminopeptidase (pip), found in Mycoplasma genitalium (strain ATCC 33530 / DSM 19775 / NCTC 10195 / G37) (Mycoplasmoides genitalium).